The following is a 260-amino-acid chain: Small ribosomal subunit protein uS2 (260 aa).

A disordered region spans residues 224–260; that stretch reads GRQGQDAGEDSAEKTFADTADGEGDFEESSNNENQEA. Positions 243–260 are enriched in acidic residues; that stretch reads ADGEGDFEESSNNENQEA.

Belongs to the universal ribosomal protein uS2 family.

The protein is Small ribosomal subunit protein uS2 of Oenococcus oeni (strain ATCC BAA-331 / PSU-1).